The sequence spans 499 residues: MNSSLVILYHREPYDEVRENGKTVYREKKSPNGILPTLKSFFADAEQSTWVAWKQVSPKQKDDFQADMSIEGLGDRCTVRRVPLTAEQVKNFYHITSKEAFWPILHSFPWQFTYDSSDWDNFQHINRLFAEAACADADDNALFWVHDYNLWLAPLYIRQLKPNAKIAFFHHTPFPSVDIFNILPWREAIVESLLACDLCGFHIPRYVENFVAVARSLKPVEITRRVVVDQAFTPYGTALAEPELTTQLRYGDRLINLDAFPVGTNPANIRAIVAKESVQQKVAEIKQDLGGKRLIVSAGRVDYVKGTKEMLMCYERLLERRPELQGEISLVVPVAKAAEGMRIYRNAQNEIERLAGKINGRFAKLSWTPVMLFTSPLAYEELIALFCAADIAWITPLRDGLNLVAKEYVVAKNGEEGVLILSEFAGCAVELPDAVLTNPYASSRMDESIDQALAMDKDEQKKRMGRMYAAIKRYDVQQWANHLLREAYADVVLGEPPQM.

This sequence belongs to the glycosyltransferase 20 family. Interacts with GGP-P. In terms of processing, seems to be degraded, at least in vitro, by FtsH2. In an ftsH2 disruption strain inactive GGPS accumulates.

The protein localises to the cytoplasm. The enzyme catalyses ADP-alpha-D-glucose + sn-glycerol 3-phosphate = 2-O-(alpha-D-glucopyranosyl)-sn-glycerol 3-phosphate + ADP + H(+). Its pathway is glycan metabolism; glucosylglycerol biosynthesis. Involved in salt tolerance by producing GG-phosphate from ADP-glucose and glycerol-3-phosphate (G3P), an intermediate in the synthesis of the osmolyte glucosylglycerol (GG). The chain is Glucosylglycerol-phosphate synthase (ggpS) from Synechocystis sp. (strain ATCC 27184 / PCC 6803 / Kazusa).